Reading from the N-terminus, the 49-residue chain is Small, acid-soluble spore protein O (49 aa).

Positions 1–49 (MGKRKANHTISGMNAASAQGQGTGYNEEFANEPLTPAERQNNKKRKKNQ) are disordered. Polar residues predominate over residues 8–20 (HTISGMNAASAQG).

Belongs to the SspO family.

It is found in the spore core. The polypeptide is Small, acid-soluble spore protein O (Bacillus cereus (strain B4264)).